A 211-amino-acid chain; its full sequence is Claudin-1 (211 aa).

Residues 1 to 7 (MANAGLQ) are Cytoplasmic-facing. A helical transmembrane segment spans residues 8 to 28 (LLGFILASLGWIGSIVSTALP). The Extracellular segment spans residues 29–81 (QWKIYSYAGDNIVTAQAIYEGLWMSCVSQSTGQIQCKVFDSLLNLNSTLQATR). An intrachain disulfide couples C54 to C64. A helical membrane pass occupies residues 82-102 (ALMVIGILLGLIAIFVSTIGM). Topologically, residues 103-115 (KCMRCLEDDEVQK) are cytoplasmic. A helical membrane pass occupies residues 116 to 136 (MWMAVIGGIIFLISGLATLVA). Residues 137-163 (TAWYGNRIVQEFYDPLTPINARYEFGQ) are Extracellular-facing. The helical transmembrane segment at 164–184 (ALFTGWAAASLCLLGGVLLSC) threads the bilayer. At 185–211 (SCPRKTTSYPTPRPYPKPTPSSGKDYV) the chain is on the cytoplasmic side. Positions 190–211 (TTSYPTPRPYPKPTPSSGKDYV) are disordered. Residues 210–211 (YV) form an interactions with TJP1, TJP2, TJP3 and PATJ region.

It belongs to the claudin family. Can form homo- and heteropolymers with other CLDN. Homopolymers interact with CLDN3, but not CLDN2, homopolymers. Directly interacts with TJP1/ZO-1, TJP2/ZO-2 and TJP3/ZO-3. Interacts with MPDZ and PATJ. Interacts with OCLN, CD81, CLDN4, CLDN6 and CLDN9. Detected in epidermis and liver (at protein level). Widely expressed, with highest levels in liver and kidney.

Its subcellular location is the cell junction. The protein resides in the tight junction. It localises to the cell membrane. It is found in the basolateral cell membrane. Functionally, claudins function as major constituents of the tight junction complexes that regulate the permeability of epithelia. While some claudin family members play essential roles in the formation of impermeable barriers, others mediate the permeability to ions and small molecules. Often, several claudin family members are coexpressed and interact with each other, and this determines the overall permeability. CLDN1 is required to prevent the paracellular diffusion of small molecules through tight junctions in the epidermis and is required for the normal barrier function of the skin. Required for normal water homeostasis and to prevent excessive water loss through the skin, probably via an indirect effect on the expression levels of other proteins, since CLDN1 itself seems to be dispensable for water barrier formation in keratinocyte tight junctions. The chain is Claudin-1 (Cldn1) from Mus musculus (Mouse).